Reading from the N-terminus, the 464-residue chain is Cerebellar degeneration-related protein 2-like (464 aa).

Coiled-coil stretches lie at residues 31 to 154 (AAEL…RRKT), 201 to 264 (VSSL…KSRV), and 342 to 379 (MSILREVDEQYHALLEKYEELLGKCRRHEESLRHAEVQ). The interval 371–419 (ESLRHAEVQTSRPVSRDPSMKECRVAEPQQPPPTPPQTPSTPEALEGIS) is disordered. Basic and acidic residues predominate over residues 384–395 (VSRDPSMKECRV). Pro residues predominate over residues 399-409 (QQPPPTPPQTP).

It belongs to the CDR2 family.

This is Cerebellar degeneration-related protein 2-like (cdr2l) from Danio rerio (Zebrafish).